The chain runs to 621 residues: 1-deoxy-D-xylulose-5-phosphate synthase (621 aa).

Thiamine diphosphate is bound by residues H80 and 121 to 123 (GHS). A Mg(2+)-binding site is contributed by D152. Thiamine diphosphate-binding positions include 153 to 154 (GA), N181, Y288, and E370. N181 is a binding site for Mg(2+).

It belongs to the transketolase family. DXPS subfamily. Homodimer. Mg(2+) serves as cofactor. Requires thiamine diphosphate as cofactor.

It carries out the reaction D-glyceraldehyde 3-phosphate + pyruvate + H(+) = 1-deoxy-D-xylulose 5-phosphate + CO2. Its pathway is metabolic intermediate biosynthesis; 1-deoxy-D-xylulose 5-phosphate biosynthesis; 1-deoxy-D-xylulose 5-phosphate from D-glyceraldehyde 3-phosphate and pyruvate: step 1/1. Functionally, catalyzes the acyloin condensation reaction between C atoms 2 and 3 of pyruvate and glyceraldehyde 3-phosphate to yield 1-deoxy-D-xylulose-5-phosphate (DXP). In Vibrio campbellii (strain ATCC BAA-1116), this protein is 1-deoxy-D-xylulose-5-phosphate synthase.